A 162-amino-acid polypeptide reads, in one-letter code: 18.5 kDa class IV heat shock protein (162 aa).

The 97-residue stretch at 53–149 folds into the sHSP domain; that stretch reads TSSSTVNTQL…PPQLPEIEEN (97 aa).

Belongs to the small heat shock protein (HSP20) family. In terms of assembly, may form oligomeric structures.

Its subcellular location is the cytoplasm. The sequence is that of 18.5 kDa class IV heat shock protein (HSP18.5) from Arabidopsis thaliana (Mouse-ear cress).